The sequence spans 829 residues: Pre-mRNA-splicing factor syf1 (829 aa).

HAT repeat units lie at residues Ser-15–Gln-47, Gly-49–Lys-81, Ser-93–Gln-125, Pro-127–Ser-161, Glu-163–Ala-182, Gly-277–Ser-312, Asp-380–Ala-418, Gly-420–Arg-456, Ala-473–Leu-505, Lys-544–Asp-578, Ile-581–Glu-615, and Gly-689–Gln-723. The interval Ala-799–Glu-829 is disordered.

It belongs to the crooked-neck family. Associated with the spliceosome.

It localises to the nucleus. Functionally, involved in pre-mRNA splicing and cell cycle progression. This Neurospora crassa (strain ATCC 24698 / 74-OR23-1A / CBS 708.71 / DSM 1257 / FGSC 987) protein is Pre-mRNA-splicing factor syf1 (msp-41).